The following is a 614-amino-acid chain: 1-deoxy-D-xylulose-5-phosphate synthase (614 aa).

Thiamine diphosphate-binding positions include H74 and 115-117 (AHS). D146 serves as a coordination point for Mg(2+). Thiamine diphosphate is bound by residues 147–148 (GA), N175, Y282, and E363. N175 is a Mg(2+) binding site.

The protein belongs to the transketolase family. DXPS subfamily. In terms of assembly, homodimer. Mg(2+) is required as a cofactor. It depends on thiamine diphosphate as a cofactor.

The enzyme catalyses D-glyceraldehyde 3-phosphate + pyruvate + H(+) = 1-deoxy-D-xylulose 5-phosphate + CO2. The protein operates within metabolic intermediate biosynthesis; 1-deoxy-D-xylulose 5-phosphate biosynthesis; 1-deoxy-D-xylulose 5-phosphate from D-glyceraldehyde 3-phosphate and pyruvate: step 1/1. Catalyzes the acyloin condensation reaction between C atoms 2 and 3 of pyruvate and glyceraldehyde 3-phosphate to yield 1-deoxy-D-xylulose-5-phosphate (DXP). This chain is 1-deoxy-D-xylulose-5-phosphate synthase, found in Nitrosomonas europaea (strain ATCC 19718 / CIP 103999 / KCTC 2705 / NBRC 14298).